Reading from the N-terminus, the 337-residue chain is S-adenosylmethionine:tRNA ribosyltransferase-isomerase (337 aa).

The protein belongs to the QueA family. In terms of assembly, monomer.

It localises to the cytoplasm. It catalyses the reaction 7-aminomethyl-7-carbaguanosine(34) in tRNA + S-adenosyl-L-methionine = epoxyqueuosine(34) in tRNA + adenine + L-methionine + 2 H(+). Its pathway is tRNA modification; tRNA-queuosine biosynthesis. In terms of biological role, transfers and isomerizes the ribose moiety from AdoMet to the 7-aminomethyl group of 7-deazaguanine (preQ1-tRNA) to give epoxyqueuosine (oQ-tRNA). The chain is S-adenosylmethionine:tRNA ribosyltransferase-isomerase from Legionella pneumophila subsp. pneumophila (strain Philadelphia 1 / ATCC 33152 / DSM 7513).